Consider the following 276-residue polypeptide: Secreted RxLR effector protein 85 (276 aa).

The signal sequence occupies residues 1 to 27; it reads MRYCAFRLGLFFIGYSCCVLLSTPTLA. A RxLR motif is present at residues 110-113; the sequence is RQLR.

It belongs to the RxLR effector family.

The protein resides in the secreted. The protein localises to the host cell membrane. Its function is as follows. Secreted effector that partially suppresses the host cell death induced by cell death-inducing proteins. The protein is Secreted RxLR effector protein 85 of Plasmopara viticola (Downy mildew of grapevine).